Here is a 171-residue protein sequence, read N- to C-terminus: Lipoprotein signal peptidase (171 aa).

4 consecutive transmembrane segments (helical) span residues W15–D35, V47–S67, W72–M92, and A107–V127. Residues D128 and D146 contribute to the active site. The chain crosses the membrane as a helical span at residues A141–F161.

It belongs to the peptidase A8 family.

The protein resides in the cell inner membrane. It carries out the reaction Release of signal peptides from bacterial membrane prolipoproteins. Hydrolyzes -Xaa-Yaa-Zaa-|-(S,diacylglyceryl)Cys-, in which Xaa is hydrophobic (preferably Leu), and Yaa (Ala or Ser) and Zaa (Gly or Ala) have small, neutral side chains.. It participates in protein modification; lipoprotein biosynthesis (signal peptide cleavage). Its function is as follows. This protein specifically catalyzes the removal of signal peptides from prolipoproteins. This is Lipoprotein signal peptidase from Vibrio cholerae serotype O1 (strain ATCC 39541 / Classical Ogawa 395 / O395).